The sequence spans 366 residues: NADH-quinone oxidoreductase subunit H (366 aa).

The next 8 helical transmembrane spans lie at Leu-27–Ala-47, Phe-99–Val-119, Leu-134–Ala-154, Ala-168–Met-188, Phe-206–Val-226, Ile-268–Ile-288, Ile-294–Phe-314, and Leu-329–Met-349.

Belongs to the complex I subunit 1 family. NDH-1 is composed of 14 different subunits. Subunits NuoA, H, J, K, L, M, N constitute the membrane sector of the complex.

The protein localises to the cell inner membrane. The enzyme catalyses a quinone + NADH + 5 H(+)(in) = a quinol + NAD(+) + 4 H(+)(out). Its function is as follows. NDH-1 shuttles electrons from NADH, via FMN and iron-sulfur (Fe-S) centers, to quinones in the respiratory chain. The immediate electron acceptor for the enzyme in this species is believed to be ubiquinone. Couples the redox reaction to proton translocation (for every two electrons transferred, four hydrogen ions are translocated across the cytoplasmic membrane), and thus conserves the redox energy in a proton gradient. This subunit may bind ubiquinone. The protein is NADH-quinone oxidoreductase subunit H of Nitrosomonas europaea (strain ATCC 19718 / CIP 103999 / KCTC 2705 / NBRC 14298).